The chain runs to 40 residues: Bacterioferritin heavy chain (40 aa).

One can recognise a Ferritin-like diiron domain in the interval 1 to 40; the sequence is MRGNPEVIDYLNMLIGGELAARDQYLIHSRMYEDWGLTKY. Glu18 is a binding site for Fe cation.

This sequence belongs to the bacterioferritin family. In terms of assembly, oligomer consisting of two types of subunits: light chain and heavy chain.

Functionally, may perform analogous functions in iron detoxification and storage to that of animal ferritins. Contains approximately 750 iron atoms per molecule. In Absidia spinosa, this protein is Bacterioferritin heavy chain.